The following is a 509-amino-acid chain: 3-ketoacyl-CoA synthase 11 (509 aa).

The next 2 membrane-spanning stretches (helical) occupy residues 36 to 56 (LITH…AAQI) and 75 to 95 (LISV…YFMT). The FAE domain occupies 92–381 (YFMTRPRPVY…FFATLVGRKL (290 aa)). Residues cysteine 236, histidine 315, histidine 399, histidine 403, and asparagine 436 contribute to the active site.

The protein belongs to the thiolase-like superfamily. Chalcone/stilbene synthases family. As to expression, only expressed in guard cells. Expressed in siliques, flowers, leaves, stems, roots and seedlings.

Its subcellular location is the membrane. It catalyses the reaction a very-long-chain acyl-CoA + malonyl-CoA + H(+) = a very-long-chain 3-oxoacyl-CoA + CO2 + CoA. It functions in the pathway lipid metabolism; fatty acid biosynthesis. Its function is as follows. Active on both saturated and mono-unsaturated acyl chains C16 to C20. The sequence is that of 3-ketoacyl-CoA synthase 11 from Arabidopsis thaliana (Mouse-ear cress).